The following is a 251-amino-acid chain: Imidazole glycerol phosphate synthase subunit HisF (251 aa).

Residues D11 and D130 contribute to the active site.

This sequence belongs to the HisA/HisF family. Heterodimer of HisH and HisF.

It localises to the cytoplasm. The enzyme catalyses 5-[(5-phospho-1-deoxy-D-ribulos-1-ylimino)methylamino]-1-(5-phospho-beta-D-ribosyl)imidazole-4-carboxamide + L-glutamine = D-erythro-1-(imidazol-4-yl)glycerol 3-phosphate + 5-amino-1-(5-phospho-beta-D-ribosyl)imidazole-4-carboxamide + L-glutamate + H(+). The protein operates within amino-acid biosynthesis; L-histidine biosynthesis; L-histidine from 5-phospho-alpha-D-ribose 1-diphosphate: step 5/9. Its function is as follows. IGPS catalyzes the conversion of PRFAR and glutamine to IGP, AICAR and glutamate. The HisF subunit catalyzes the cyclization activity that produces IGP and AICAR from PRFAR using the ammonia provided by the HisH subunit. The protein is Imidazole glycerol phosphate synthase subunit HisF of Flavobacterium psychrophilum (strain ATCC 49511 / DSM 21280 / CIP 103535 / JIP02/86).